A 345-amino-acid chain; its full sequence is Fe-S cluster assembly protein DRE2 (345 aa).

The interval 29–163 (GDSGDRTLLL…KPDYAEQEVV (135 aa)) is N-terminal SAM-like domain. The tract at residues 164–237 (PLRFGAKKVN…EDTLLTEADL (74 aa)) is linker. [2Fe-2S] cluster contacts are provided by C247, C258, C261, and C263. Residues 247-263 (CAPQPGKKRRACKDCTC) form a fe-S binding site A region. Residues C308, C311, C319, and C322 each coordinate [4Fe-4S] cluster. Short sequence motifs (cx2C motif) lie at residues 308-311 (CNSC) and 319-322 (CADC). A fe-S binding site B region spans residues 308-322 (CNSCYLGDAFRCADC).

It belongs to the anamorsin family. As to quaternary structure, monomer. Interacts with TAH18. Interacts with MIA40. It depends on [2Fe-2S] cluster as a cofactor. Requires [4Fe-4S] cluster as cofactor.

It is found in the cytoplasm. The protein localises to the mitochondrion intermembrane space. Its function is as follows. Component of the cytosolic iron-sulfur (Fe-S) protein assembly (CIA) machinery required for the maturation of extramitochondrial Fe-S proteins. Part of an electron transfer chain functioning in an early step of cytosolic Fe-S biogenesis, facilitating the de novo assembly of a [4Fe-4S] cluster on the scaffold complex CFD1-NBP35. Electrons are transferred to DRE2 from NADPH via the FAD- and FMN-containing protein TAH18. TAH18-DRE2 are also required for the assembly of the diferric tyrosyl radical cofactor of ribonucleotide reductase (RNR), probably by providing electrons for reduction during radical cofactor maturation in the catalytic small subunit RNR2. This is Fe-S cluster assembly protein DRE2 from Podospora anserina (strain S / ATCC MYA-4624 / DSM 980 / FGSC 10383) (Pleurage anserina).